A 50-amino-acid chain; its full sequence is GCKGKYEECTRDSDCCDEKNRSGRKLRCLTQCDEGGCLKYRQCLFYGGLQ.

Belongs to the sea anemone type 5 potassium channel toxin family. Contains 4 disulfide bonds.

It localises to the secreted. It is found in the nematocyst. In terms of biological role, inhibits voltage-gated potassium channels (Kv1/KCNA). Is potent on Drosophila Shaker IR channels (IC(50)=94.25 nM), and rKv1.2/KCNA2 (IC(50)=172.59 nM), and moderately active on hKv1.3/KCNA3 (IC(50)=1006.48 nM), rKv1.6/KCNA6 (IC(50)=2245.93 nM), and Kv1.1/KCNA1 (IC(50) around 3 uM). In vivo, induces a rapid increase in swimming speed on zebrafish larvae, as well as death which occurs between 2 and 18 hours later. Also paralyzes swimming crabs (C.danae) when injected at the junction between the body and the walking leg. The sequence is that of Kappa-actitoxin-Bcs4a from Bunodosoma caissarum (Sea anemone).